The chain runs to 333 residues: MIDSSLPLTDIHRHLDGNIRAQTILDLGREFNIALPASTLDTLRPHVQVTSLEPDLVSFLAKLDWGVKVLASLEACRRVAYENVEDAARNGLHYVELRFSPRYMAMTHQLPVDGVVEAVIAGVREGSRDFQVDARLIGILSRTFGEAACQEELAALLAHREGITALDLAGDELGFPGALFLNHFNQARDAGWHITVHAGEAAGPESIWQAIRELGAERIGHGVKAVEDPALMDYLAEHQIGIESCLTSNVQTSTVASLAQHPLKQFLEHGVLASLNTDDPAVQGVDIIHEYTVAAPAAGLSREQIRQAQINGLTQAFLSEQEKAALIQRVAKG.

Residues H12 and H14 each coordinate Zn(2+). 3 residues coordinate substrate: H14, D16, and G170. H197 lines the Zn(2+) pocket. Residue E200 is the Proton donor of the active site. Zn(2+) is bound at residue D278. D279 provides a ligand contact to substrate.

This sequence belongs to the metallo-dependent hydrolases superfamily. Adenosine and AMP deaminases family. Adenosine deaminase subfamily. It depends on Zn(2+) as a cofactor.

The enzyme catalyses adenosine + H2O + H(+) = inosine + NH4(+). It catalyses the reaction 2'-deoxyadenosine + H2O + H(+) = 2'-deoxyinosine + NH4(+). Its function is as follows. Catalyzes the hydrolytic deamination of adenosine and 2-deoxyadenosine. The chain is Adenosine deaminase from Klebsiella pneumoniae (strain 342).